Here is a 983-residue protein sequence, read N- to C-terminus: 3',5'-cyclic-AMP phosphodiesterase, isoforms N/G (983 aa).

Disordered regions lie at residues 31 to 333 (MPEG…SAGL), 349 to 370 (SDSD…ASES), 400 to 429 (VPAS…LSQG), and 528 to 566 (SAGQ…RLPT). A compositionally biased stretch (basic and acidic residues) spans 35-50 (GEDHRGDLNQKGENNN). Polar residues predominate over residues 51–60 (RPRPSISLAN). Positions 84–97 (SVGGGDSDGGGEAI) are enriched in gly residues. 2 stretches are compositionally biased toward low complexity: residues 112–121 (LSTTTSNSSS) and 145–167 (QLQQ…SQRS). Residues 174–199 (AEGEEFDVDPMDEDDEDQTYDRETEE) show a composition bias toward acidic residues. Composition is skewed to low complexity over residues 219-234 (SSLF…TTSS) and 248-261 (AASI…SDLM). Composition is skewed to polar residues over residues 268–287 (STAT…SQRR), 358–368 (KSMSRNSSIAS), and 401–419 (PASN…SRSG). Positions 569 to 898 (VETPRENELG…DYYQSMIPPS (330 aa)) constitute a PDEase domain. Residue histidine 645 is the Proton donor of the active site. 645 to 649 (HNSLH) provides a ligand contact to 3',5'-cyclic AMP. A divalent metal cation-binding residues include histidine 649, histidine 685, aspartate 686, and aspartate 803. The 3',5'-cyclic AMP site is built by aspartate 686, aspartate 803, and glutamine 854. Over residues 920 to 937 (EESDQENLAELEEGDESG) the composition is skewed to acidic residues. Residues 920-983 (EESDQENLAE…CQNQPQHGGM (64 aa)) form a disordered region. Positions 938-955 (GESTTTGTTGTTAASALS) are enriched in low complexity. Residues 956 to 967 (GAGGGGGGGGGM) are compositionally biased toward gly residues. Residues 973-983 (GCQNQPQHGGM) show a composition bias toward polar residues.

Belongs to the cyclic nucleotide phosphodiesterase family. PDE4 subfamily. In terms of assembly, monomer. A divalent metal cation is required as a cofactor.

It catalyses the reaction 3',5'-cyclic AMP + H2O = AMP + H(+). The protein operates within purine metabolism; 3',5'-cyclic AMP degradation; AMP from 3',5'-cyclic AMP: step 1/1. In terms of biological role, hydrolyzes the second messenger cAMP, which is a key regulator of many important physiological processes. Vital for female fertility. Required for learning/memory. This is 3',5'-cyclic-AMP phosphodiesterase, isoforms N/G from Drosophila melanogaster (Fruit fly).